The primary structure comprises 425 residues: Riboflavin biosynthesis protein RibBA (425 aa).

The tract at residues 1-204 is DHBP synthase; sequence MTRLDSVERA…IADLIEWRRK (204 aa). Residues 28-29, Asp-33, 141-145, and Glu-165 each bind D-ribulose 5-phosphate; these read RE and RPGHT. Glu-29 lines the Mg(2+) pocket. His-144 is a binding site for Mg(2+). Positions 205–425 are GTP cyclohydrolase II; the sequence is HEKHIERIAE…HLPGEFGGAL (221 aa). Position 259–263 (259–263) interacts with GTP; sequence RVHSE. Cys-264, Cys-275, and Cys-277 together coordinate Zn(2+). GTP-binding positions include Gln-280, 303-305, and Thr-325; that span reads EGR. Asp-337 serves as the catalytic Proton acceptor; for GTP cyclohydrolase activity. The Nucleophile; for GTP cyclohydrolase activity role is filled by Arg-339. GTP is bound by residues Thr-360 and Lys-365.

It in the N-terminal section; belongs to the DHBP synthase family. This sequence in the C-terminal section; belongs to the GTP cyclohydrolase II family. Mg(2+) is required as a cofactor. Requires Mn(2+) as cofactor. Zn(2+) serves as cofactor.

It catalyses the reaction D-ribulose 5-phosphate = (2S)-2-hydroxy-3-oxobutyl phosphate + formate + H(+). It carries out the reaction GTP + 4 H2O = 2,5-diamino-6-hydroxy-4-(5-phosphoribosylamino)-pyrimidine + formate + 2 phosphate + 3 H(+). It functions in the pathway cofactor biosynthesis; riboflavin biosynthesis; 2-hydroxy-3-oxobutyl phosphate from D-ribulose 5-phosphate: step 1/1. The protein operates within cofactor biosynthesis; riboflavin biosynthesis; 5-amino-6-(D-ribitylamino)uracil from GTP: step 1/4. In terms of biological role, catalyzes the conversion of D-ribulose 5-phosphate to formate and 3,4-dihydroxy-2-butanone 4-phosphate. Functionally, catalyzes the conversion of GTP to 2,5-diamino-6-ribosylamino-4(3H)-pyrimidinone 5'-phosphate (DARP), formate and pyrophosphate. The sequence is that of Riboflavin biosynthesis protein RibBA from Mycobacterium avium (strain 104).